A 232-amino-acid polypeptide reads, in one-letter code: MKSLNDAISKIIDYKFTNYAILEEALTHPSVNKRNSKNQIVSYERLEFLGDSVLNMVVSATLFKLFPEEKEGALAKRKTDLVCGNTIANVAKEIKLGSFIIMNNSERCNGGRCNLKNLENSLEALIGAIYIDGGLENVEKFIIQYWEKLAKGMLDPPQDPKTSLQEWTQKNKLPLPEYELVKQTGPAHNPEFTISVCIEDYGKVSACASSKKIAEQKAAELMLEKIGKDASV.

The RNase III domain occupies 5-134 (NDAISKIIDY…LIGAIYIDGG (130 aa)). Residue Glu47 coordinates Mg(2+). Residue Asp51 is part of the active site. Residues Asn120 and Glu123 each coordinate Mg(2+). Glu123 is an active-site residue. One can recognise a DRBM domain in the interval 159-228 (DPKTSLQEWT…AELMLEKIGK (70 aa)).

The protein belongs to the ribonuclease III family. As to quaternary structure, homodimer. Mg(2+) is required as a cofactor.

It localises to the cytoplasm. The catalysed reaction is Endonucleolytic cleavage to 5'-phosphomonoester.. Functionally, digests double-stranded RNA. Involved in the processing of primary rRNA transcript to yield the immediate precursors to the large and small rRNAs (23S and 16S). Processes some mRNAs, and tRNAs when they are encoded in the rRNA operon. Processes pre-crRNA and tracrRNA of type II CRISPR loci if present in the organism. This is Ribonuclease 3 from Wolbachia pipientis wMel.